The following is a 25-amino-acid chain: Xenoposin precursor fragment BM3 (25 aa).

Expressed by the skin glands.

The protein resides in the secreted. In terms of biological role, antimicrobial peptide. The sequence is that of Xenoposin precursor fragment BM3 from Xenopus boumbaensis (Mawa clawed frog).